The chain runs to 73 residues: Small ribosomal subunit protein bS18 (73 aa).

Belongs to the bacterial ribosomal protein bS18 family. In terms of assembly, part of the 30S ribosomal subunit. Forms a tight heterodimer with protein bS6.

Its function is as follows. Binds as a heterodimer with protein bS6 to the central domain of the 16S rRNA, where it helps stabilize the platform of the 30S subunit. This chain is Small ribosomal subunit protein bS18, found in Synechococcus sp. (strain WH7803).